A 328-amino-acid chain; its full sequence is MSEKIRVLLYYKYVSIENAQEYAAKHLEFCKSIGLKGRILIADEGINGTVSGDYETTQKYMDWVHSDERFADLWFKIDEENQQAFRKMFVRYKKEIVHLGLEDNNFDSDINPLETTGKYLNPKQFKEALLDEDTVVLDTRNDYEYDLGHFRGAIRPDIRNFRELPQWVRDNKDKFMEKRVVVYCTGGVRCEKFSGWMVREGFKDVGQLHGGIATYGKDPEVQGELWDGAMYVFDDRISVPINHVNPTVISKDYFDGTPCERYVNCANPFCNKQIFASEENETKYVRGCSPECRAHERNRYVQENGLSRQEWAERLEAIGESLPEFVGA.

One can recognise a Rhodanese domain in the interval leucine 130–glutamate 224. Cysteine 184 (cysteine persulfide intermediate) is an active-site residue.

Belongs to the TrhO family.

The catalysed reaction is uridine(34) in tRNA + AH2 + O2 = 5-hydroxyuridine(34) in tRNA + A + H2O. Its function is as follows. Catalyzes oxygen-dependent 5-hydroxyuridine (ho5U) modification at position 34 in tRNAs. The chain is tRNA uridine(34) hydroxylase from Streptococcus pyogenes serotype M6 (strain ATCC BAA-946 / MGAS10394).